The primary structure comprises 355 residues: 3-dehydroquinate synthase (355 aa).

NAD(+) is bound by residues 106–110 (GVVGD), 130–131 (TS), lysine 143, and lysine 152. Residues glutamate 185, histidine 246, and histidine 262 each contribute to the Zn(2+) site.

Belongs to the sugar phosphate cyclases superfamily. Dehydroquinate synthase family. Co(2+) serves as cofactor. Zn(2+) is required as a cofactor. It depends on NAD(+) as a cofactor.

It is found in the cytoplasm. It catalyses the reaction 7-phospho-2-dehydro-3-deoxy-D-arabino-heptonate = 3-dehydroquinate + phosphate. Its pathway is metabolic intermediate biosynthesis; chorismate biosynthesis; chorismate from D-erythrose 4-phosphate and phosphoenolpyruvate: step 2/7. Its function is as follows. Catalyzes the conversion of 3-deoxy-D-arabino-heptulosonate 7-phosphate (DAHP) to dehydroquinate (DHQ). This Latilactobacillus sakei subsp. sakei (strain 23K) (Lactobacillus sakei subsp. sakei) protein is 3-dehydroquinate synthase.